Here is a 220-residue protein sequence, read N- to C-terminus: Protein-L-isoaspartate O-methyltransferase (220 aa).

S64 is an active-site residue.

The protein belongs to the methyltransferase superfamily. L-isoaspartyl/D-aspartyl protein methyltransferase family.

The protein localises to the cytoplasm. It catalyses the reaction [protein]-L-isoaspartate + S-adenosyl-L-methionine = [protein]-L-isoaspartate alpha-methyl ester + S-adenosyl-L-homocysteine. In terms of biological role, catalyzes the methyl esterification of L-isoaspartyl residues in peptides and proteins that result from spontaneous decomposition of normal L-aspartyl and L-asparaginyl residues. It plays a role in the repair and/or degradation of damaged proteins. This Thermococcus onnurineus (strain NA1) protein is Protein-L-isoaspartate O-methyltransferase.